The following is a 230-amino-acid chain: Ribose-5-phosphate isomerase A (230 aa).

Residues 29-32 (TGST), 85-88 (DGAD), and 98-101 (KGGG) each bind substrate. Catalysis depends on Glu-107, which acts as the Proton acceptor. Lys-125 provides a ligand contact to substrate.

It belongs to the ribose 5-phosphate isomerase family. Homodimer.

The catalysed reaction is aldehydo-D-ribose 5-phosphate = D-ribulose 5-phosphate. Its pathway is carbohydrate degradation; pentose phosphate pathway; D-ribose 5-phosphate from D-ribulose 5-phosphate (non-oxidative stage): step 1/1. In terms of biological role, catalyzes the reversible conversion of ribose-5-phosphate to ribulose 5-phosphate. In Staphylococcus epidermidis (strain ATCC 35984 / DSM 28319 / BCRC 17069 / CCUG 31568 / BM 3577 / RP62A), this protein is Ribose-5-phosphate isomerase A.